The chain runs to 462 residues: Sensor histidine kinase ZraS (462 aa).

Over 1–14 the chain is Cytoplasmic; that stretch reads MNVMRLSKDSVAVG. A helical membrane pass occupies residues 15–35; the sequence is LSWLLTGLILLLVCLFSALIV. Topologically, residues 36 to 197 are periplasmic; the sequence is RDYGRENEAA…ADHARGLRNM (162 aa). The chain crosses the membrane as a helical span at residues 198–218; sequence VIMLCAAGVVMAATVLAQFWF. The Cytoplasmic segment spans residues 219–462; it reads RRYQRSRKQL…VNGQQKDEQG (244 aa). One can recognise a Histidine kinase domain in the interval 247–455; sequence GVAHEIRNPL…LFTFYLPVNG (209 aa). The residue at position 250 (His250) is a Phosphohistidine; by autocatalysis.

In terms of processing, autophosphorylated.

It localises to the cell inner membrane. It carries out the reaction ATP + protein L-histidine = ADP + protein N-phospho-L-histidine.. Activity of the ZraS/ZraR two-component system is repressed by the zinc-bound form of ZraP, which probably interacts with the periplasmic region of ZraS. Part of the Zra signaling pathway, an envelope stress response (ESR) system composed of the periplasmic accessory protein ZraP, the histidine kinase ZraS and the transcriptional regulator ZraR. The ZraPSR system contributes to antibiotic resistance and is important for membrane integrity in the presence of membrane-targeting biocides. ZraS is a member of the two-component regulatory system ZraS/ZraR. Functions as a membrane-associated sensor kinase that phosphorylates ZraR in response to high concentrations of Zn(2+) or Pb(2+) in the medium. The polypeptide is Sensor histidine kinase ZraS (zraS) (Klebsiella oxytoca).